The primary structure comprises 329 residues: uncharacterized protein (329 aa).

2 disordered regions span residues Arg16–Cys41 and Leu183–Pro229. The span at Ser213–Pro229 shows a compositional bias: basic and acidic residues.

In terms of tissue distribution, expressed in testis and epididymis. Expressed at lower levels in ovary.

Dispensable for normal development and fertility. This is an uncharacterized protein from Mus musculus (Mouse).